The following is a 148-amino-acid chain: Large ribosomal subunit protein uL15 (148 aa).

A compositionally biased stretch (basic residues) spans 1 to 30 (MPSRLRKTRKLRGHVSHGHGRIGKHRKHPG). Residues 1–38 (MPSRLRKTRKLRGHVSHGHGRIGKHRKHPGGRGNAGGL) form a disordered region. His39 is modified ((3S)-3-hydroxyhistidine). 2 positions are modified to N6-acetyllysine: Lys47 and Lys55. Ser68 carries the post-translational modification Phosphoserine. Position 110 is an N6-acetyllysine (Lys110).

Belongs to the universal ribosomal protein uL15 family. In terms of processing, hydroxylated on His-39 by MINA.

This chain is Large ribosomal subunit protein uL15 (RPL27A), found in Pan troglodytes (Chimpanzee).